Reading from the N-terminus, the 276-residue chain is A-factor receptor protein (276 aa).

The 61-residue stretch at 8 to 68 (VQTWRSIVDA…AIMDEQTSTV (61 aa)) folds into the HTH tetR-type domain. The segment at residues 31 to 50 (AISEILRRAKVTKGALYFHF) is a DNA-binding region (H-T-H motif). The segment covering 207–220 (EKAEREEQEARIAA) has biased composition (basic and acidic residues). Positions 207–276 (EKAEREEQEA…AGVAAGGVVA (70 aa)) are disordered. The segment covering 221-235 (EAKGAGSDAATDSGS) has biased composition (low complexity). The span at 236-257 (RSGGSGLRGGGSGRGPRAGGAG) shows a compositional bias: gly residues.

Homodimer or multimer. Binds to both DNA and A-factor as a homodimer.

It localises to the cytoplasm. Functionally, represses adpA expression by binding to the promoter region in the absence of A-factor, causing repression of streptomycin production and of sporulation. The protein is A-factor receptor protein (arpA) of Streptomyces griseus.